A 56-amino-acid chain; its full sequence is Ovomucoid (56 aa).

Residues 6-56 enclose the Kazal-like domain; sequence VDCSEYPKPACTLEYRPLCGSDNKTYGNKCNFCNAVVESNGTLTLSHFGKC. Intrachain disulfides connect Cys-8-Cys-38, Cys-16-Cys-35, and Cys-24-Cys-56. A glycan (N-linked (GlcNAc...) asparagine) is linked at Asn-45.

It is found in the secreted. The protein is Ovomucoid of Meleagris ocellata (Ocellated turkey).